Consider the following 2102-residue polypeptide: Probable serine/threonine-protein kinase DDB_G0272282 (2102 aa).

One can recognise a PX domain in the interval 1–118 (MKYQLSILGD…NWLVPQNEPA (118 aa)). The region spanning 124-222 (NPDKSGYLIK…WIKAIELSQQ (99 aa)) is the PH domain. A compositionally biased stretch (basic and acidic residues) spans 225-240 (QDQEQYRKQEEEERQK). 9 disordered regions span residues 225–289 (QDQE…SDGS), 302–390 (GPNN…SDLN), 426–558 (EQPG…SASP), 574–665 (SNLP…PLPN), 685–768 (NNNS…NNSL), 804–842 (KKKE…GTLR), 1029–1051 (QQQQ…SSVN), 1106–1224 (GTPT…PQPQ), and 1476–1514 (SSKV…SSLT). Composition is skewed to low complexity over residues 256–281 (STLT…LPSS) and 304–327 (NNSN…NNHN). Residues 328 to 348 (HYNHHNNNHNNSHHHHHHHNG) are compositionally biased toward basic residues. Low complexity-rich tracts occupy residues 353 to 376 (SSQV…STSL) and 426 to 437 (EQPGSYQQPQHQ). A compositionally biased stretch (gly residues) spans 438–450 (QGGGGGGGGGGGN). Over residues 466-484 (SNLSSRSNSNSSGSSSGSG) the composition is skewed to low complexity. Positions 485 to 501 (SSSGSGPIGSGGVGGGL) are enriched in gly residues. 2 stretches are compositionally biased toward low complexity: residues 535 to 558 (SNSS…SASP) and 587 to 626 (NANN…NNGN). Residues 627–659 (TASGSSCNTTPNLLPAPTNVSPIQNRARSSPMT) are compositionally biased toward polar residues. A compositionally biased stretch (basic and acidic residues) spans 804–824 (KKKEKDKEKEKDKEKEKEKEI). Polar residues predominate over residues 827–841 (NISTSTTPNKKNGTL). Polar residues predominate over residues 1106–1118 (GTPTTTSGDNTPL). 3 stretches are compositionally biased toward low complexity: residues 1119–1182 (TNTA…NSSI), 1196–1221 (EQQQ…QQQP), and 1476–1492 (SSKV…SPIL). Pro residues predominate over residues 1493 to 1507 (SSPPPPMKQPPPQVI). The Protein kinase domain occupies 1527–1851 (FEIIKPISRG…AYEVKTHPFF (325 aa)). Residues 1533–1541 (ISRGAFGRV) and lysine 1556 contribute to the ATP site. Aspartate 1650 (proton acceptor) is an active-site residue. Composition is skewed to low complexity over residues 1687–1729 (NTNT…SQTN), 1902–1999 (SQPQ…NINN), and 2006–2052 (NNNS…QINN). Disordered regions lie at residues 1687 to 1741 (NTNT…KNTL) and 1902 to 2070 (SQPQ…SKIE). The AGC-kinase C-terminal domain occupies 1852 to 1911 (ANVNWDTLIDQEMDNIFLPKPENNYDTDYFWDRQSMYDDEAEDDFLTINQSQPQHQSQHQ).

Belongs to the protein kinase superfamily. AGC Ser/Thr protein kinase family.

The enzyme catalyses L-seryl-[protein] + ATP = O-phospho-L-seryl-[protein] + ADP + H(+). It catalyses the reaction L-threonyl-[protein] + ATP = O-phospho-L-threonyl-[protein] + ADP + H(+). In Dictyostelium discoideum (Social amoeba), this protein is Probable serine/threonine-protein kinase DDB_G0272282.